The following is a 156-amino-acid chain: ATP synthase subunit b (156 aa).

The helical transmembrane segment at 4–26 (GATFWGPMISFALFVWFTMKFVW) threads the bilayer.

Belongs to the ATPase B chain family. In terms of assembly, F-type ATPases have 2 components, F(1) - the catalytic core - and F(0) - the membrane proton channel. F(1) has five subunits: alpha(3), beta(3), gamma(1), delta(1), epsilon(1). F(0) has three main subunits: a(1), b(2) and c(10-14). The alpha and beta chains form an alternating ring which encloses part of the gamma chain. F(1) is attached to F(0) by a central stalk formed by the gamma and epsilon chains, while a peripheral stalk is formed by the delta and b chains.

It is found in the cell inner membrane. F(1)F(0) ATP synthase produces ATP from ADP in the presence of a proton or sodium gradient. F-type ATPases consist of two structural domains, F(1) containing the extramembraneous catalytic core and F(0) containing the membrane proton channel, linked together by a central stalk and a peripheral stalk. During catalysis, ATP synthesis in the catalytic domain of F(1) is coupled via a rotary mechanism of the central stalk subunits to proton translocation. Its function is as follows. Component of the F(0) channel, it forms part of the peripheral stalk, linking F(1) to F(0). The polypeptide is ATP synthase subunit b (Halorhodospira halophila (strain DSM 244 / SL1) (Ectothiorhodospira halophila (strain DSM 244 / SL1))).